The sequence spans 261 residues: Cytochrome c oxidase subunit 3 (261 aa).

The Mitochondrial matrix segment spans residues 1-15 (MTHQTHAYHMVNPSP). The chain crosses the membrane as a helical span at residues 16 to 34 (WPLTGALSALLMTFGLIMW). Residues 35-40 (FHFNST) are Mitochondrial intermembrane-facing. The helical transmembrane segment at 41 to 66 (ALLMLGLTTNMLTMYQWWRDIIREST) threads the bilayer. Residues 67–72 (FQGHHT) lie on the Mitochondrial matrix side of the membrane. A helical membrane pass occupies residues 73–105 (PVVQKGLRYGMILFIISEVLFFTGFFWAFYHSS). The Mitochondrial intermembrane portion of the chain corresponds to 106-128 (LAPTPELGGCWPPTGIHPLNPLE). Residues 129–152 (VPLLNTSVLLASGVSITWAHHSLM) traverse the membrane as a helical segment. Over 153–155 (EGH) the chain is Mitochondrial matrix. The helical transmembrane segment at 156-183 (RNHMLQALFITIALGVYFTLLQASEYYE) threads the bilayer. Residues 184–190 (APFTISD) are Mitochondrial intermembrane-facing. The helical transmembrane segment at 191–223 (GVYGSTFFVATGFHGLHVIIGSTFLIVCFFRQL) threads the bilayer. Residues 224–232 (KFHFTSSHH) lie on the Mitochondrial matrix side of the membrane. Residues 233-256 (FGFEAAAWYWHFVDVVWLFLYVSI) form a helical membrane-spanning segment. The Mitochondrial intermembrane portion of the chain corresponds to 257–261 (YWWGS).

It belongs to the cytochrome c oxidase subunit 3 family. In terms of assembly, component of the cytochrome c oxidase (complex IV, CIV), a multisubunit enzyme composed of 14 subunits. The complex is composed of a catalytic core of 3 subunits MT-CO1, MT-CO2 and MT-CO3, encoded in the mitochondrial DNA, and 11 supernumerary subunits COX4I, COX5A, COX5B, COX6A, COX6B, COX6C, COX7A, COX7B, COX7C, COX8 and NDUFA4, which are encoded in the nuclear genome. The complex exists as a monomer or a dimer and forms supercomplexes (SCs) in the inner mitochondrial membrane with NADH-ubiquinone oxidoreductase (complex I, CI) and ubiquinol-cytochrome c oxidoreductase (cytochrome b-c1 complex, complex III, CIII), resulting in different assemblies (supercomplex SCI(1)III(2)IV(1) and megacomplex MCI(2)III(2)IV(2)).

Its subcellular location is the mitochondrion inner membrane. The enzyme catalyses 4 Fe(II)-[cytochrome c] + O2 + 8 H(+)(in) = 4 Fe(III)-[cytochrome c] + 2 H2O + 4 H(+)(out). In terms of biological role, component of the cytochrome c oxidase, the last enzyme in the mitochondrial electron transport chain which drives oxidative phosphorylation. The respiratory chain contains 3 multisubunit complexes succinate dehydrogenase (complex II, CII), ubiquinol-cytochrome c oxidoreductase (cytochrome b-c1 complex, complex III, CIII) and cytochrome c oxidase (complex IV, CIV), that cooperate to transfer electrons derived from NADH and succinate to molecular oxygen, creating an electrochemical gradient over the inner membrane that drives transmembrane transport and the ATP synthase. Cytochrome c oxidase is the component of the respiratory chain that catalyzes the reduction of oxygen to water. Electrons originating from reduced cytochrome c in the intermembrane space (IMS) are transferred via the dinuclear copper A center (CU(A)) of subunit 2 and heme A of subunit 1 to the active site in subunit 1, a binuclear center (BNC) formed by heme A3 and copper B (CU(B)). The BNC reduces molecular oxygen to 2 water molecules using 4 electrons from cytochrome c in the IMS and 4 protons from the mitochondrial matrix. This is Cytochrome c oxidase subunit 3 (MT-CO3) from Tragelaphus oryx (Eland).